A 228-amino-acid polypeptide reads, in one-letter code: Phosphoglycolate phosphatase (228 aa).

Catalysis depends on Asp-12, which acts as the Nucleophile. Positions 12, 14, and 177 each coordinate Mg(2+).

The protein belongs to the HAD-like hydrolase superfamily. CbbY/CbbZ/Gph/YieH family. The cofactor is Mg(2+).

The catalysed reaction is 2-phosphoglycolate + H2O = glycolate + phosphate. Its pathway is organic acid metabolism; glycolate biosynthesis; glycolate from 2-phosphoglycolate: step 1/1. Its function is as follows. Specifically catalyzes the dephosphorylation of 2-phosphoglycolate. Is involved in the dissimilation of the intracellular 2-phosphoglycolate formed during the DNA repair of 3'-phosphoglycolate ends, a major class of DNA lesions induced by oxidative stress. In Vibrio vulnificus (strain YJ016), this protein is Phosphoglycolate phosphatase.